The primary structure comprises 1044 residues: R3H domain-containing protein 2 (1044 aa).

2 disordered regions span residues 23-71 (EESV…AKSN) and 106-147 (SCPS…QEYT). Residues 36 to 56 (PSKEDVEKEGEENGLRQETQR) are compositionally biased toward basic and acidic residues. The residue at position 37 (serine 37) is a Phosphoserine. Residues 58 to 71 (TSSHGHARKRAKSN) show a composition bias toward basic residues. The segment covering 109–143 (SDKEEEKSTKDVSEKEDKDKSKEKVPRKMLSRDSS) has biased composition (basic and acidic residues). Serine 143 carries the phosphoserine modification. The region spanning 169 to 232 (RMMLLKLEQE…AVIINKTSST (64 aa)) is the R3H domain. Residues 233 to 303 (RIPEQRFSEH…VRERIFARET (71 aa)) form the SUZ domain. 2 stretches are compositionally biased toward basic and acidic residues: residues 261–270 (DASMDRDDNQ) and 277–288 (DGRRSKSIEERE). 7 disordered regions span residues 261-288 (DASMDRDDNQMRVPLQDGRRSKSIEERE), 320-408 (SSSS…LSRP), 433-485 (CTAQ…FSPS), 502-533 (MAEDLSNPFGQMSLSRQGSTEAADPSSALFQP), 551-600 (GQPL…SNQQ), 729-770 (GTSP…SPSG), and 807-848 (GQKP…SLSN). Over residues 338–349 (SRTSSSRQSSTD) the composition is skewed to low complexity. 3 positions are modified to phosphoserine: serine 362, serine 365, and serine 381. Residues 433–449 (CTAQQQQQQQQQQQQLP) are compositionally biased toward low complexity. 2 stretches are compositionally biased toward polar residues: residues 509-521 (PFGQMSLSRQGST) and 554-572 (LPTSNYSTSSHAPPTQQVL). Residues 757 to 770 (PQMSQQYSGVSPSG) show a composition bias toward low complexity. Residues 818-848 (GSPQANAQMGSSPVTSPTQSPAPSPVTSLSN) are compositionally biased toward polar residues. A phosphoserine mark is found at serine 921 and serine 923. Threonine 924 and threonine 928 each carry phosphothreonine.

The protein resides in the nucleus. The sequence is that of R3H domain-containing protein 2 (R3hdm2) from Mus musculus (Mouse).